We begin with the raw amino-acid sequence, 595 residues long: Aspartate--tRNA(Asp/Asn) ligase (595 aa).

Position 175 (E175) interacts with L-aspartate. The aspartate stretch occupies residues 199 to 202 (QQYK). Residues R221 and H454 each coordinate L-aspartate. Residue 221 to 223 (RDE) coordinates ATP. E488 contacts ATP. R495 serves as a coordination point for L-aspartate. 540 to 543 (GIDR) lines the ATP pocket.

The protein belongs to the class-II aminoacyl-tRNA synthetase family. Type 1 subfamily. In terms of assembly, homodimer.

It localises to the cytoplasm. It carries out the reaction tRNA(Asx) + L-aspartate + ATP = L-aspartyl-tRNA(Asx) + AMP + diphosphate. In terms of biological role, aspartyl-tRNA synthetase with relaxed tRNA specificity since it is able to aspartylate not only its cognate tRNA(Asp) but also tRNA(Asn). Reaction proceeds in two steps: L-aspartate is first activated by ATP to form Asp-AMP and then transferred to the acceptor end of tRNA(Asp/Asn). In Brucella anthropi (strain ATCC 49188 / DSM 6882 / CCUG 24695 / JCM 21032 / LMG 3331 / NBRC 15819 / NCTC 12168 / Alc 37) (Ochrobactrum anthropi), this protein is Aspartate--tRNA(Asp/Asn) ligase.